The sequence spans 395 residues: Altered inheritance of mitochondria protein 39, mitochondrial (395 aa).

The chain crosses the membrane as a helical span at residues 156–176 (QIWSAIFGGIFGVILGYSLIY).

This sequence belongs to the AIM39 family.

It localises to the mitochondrion membrane. The polypeptide is Altered inheritance of mitochondria protein 39, mitochondrial (AIM39) (Saccharomyces cerevisiae (strain ATCC 204508 / S288c) (Baker's yeast)).